The following is a 356-amino-acid chain: sn-glycerol-3-phosphate import ATP-binding protein UgpC (356 aa).

The ABC transporter domain occupies 4–235; sequence LKLQAVTKSW…PASRFVASFI (232 aa). 37–44 provides a ligand contact to ATP; sequence GPSGCGKS.

It belongs to the ABC transporter superfamily. sn-glycerol-3-phosphate importer (TC 3.A.1.1.3) family. The complex is composed of two ATP-binding proteins (UgpC), two transmembrane proteins (UgpA and UgpE) and a solute-binding protein (UgpB).

The protein localises to the cell inner membrane. The enzyme catalyses sn-glycerol 3-phosphate(out) + ATP + H2O = sn-glycerol 3-phosphate(in) + ADP + phosphate + H(+). Part of the ABC transporter complex UgpBAEC involved in sn-glycerol-3-phosphate (G3P) import. Responsible for energy coupling to the transport system. This Salmonella typhi protein is sn-glycerol-3-phosphate import ATP-binding protein UgpC.